The primary structure comprises 229 residues: MKLVLIRHGQSEWNKLNLFTGWHDVDLSQEGVVEAMTAGKRIKEAGLEFDVAFTSVLTRAIKTLNYVLEESDQMWVPVHKSWRLNERHYGALQGLNKQETAEKYGADQVQKWRRSYDTLPPLLEENDERQAKNDRRYQLLDTHAIPSGENLKVTLERVIPYWMDTIAPEIKEGRRVVIAAHGNSLRALVKFLEGISDDEIMDLEIPTGVPLVYELNADLKPVNKYYLDK.

Residues 7–14 (RHGQSEWN), 20–21 (TG), Arg-59, 86–89 (ERHY), Lys-97, 113–114 (RR), and 182–183 (GN) each bind substrate. The active-site Tele-phosphohistidine intermediate is His-8. Glu-86 serves as the catalytic Proton donor/acceptor.

This sequence belongs to the phosphoglycerate mutase family. BPG-dependent PGAM subfamily.

The enzyme catalyses (2R)-2-phosphoglycerate = (2R)-3-phosphoglycerate. It functions in the pathway carbohydrate degradation; glycolysis; pyruvate from D-glyceraldehyde 3-phosphate: step 3/5. Its function is as follows. Catalyzes the interconversion of 2-phosphoglycerate and 3-phosphoglycerate. This Listeria monocytogenes serovar 1/2a (strain ATCC BAA-679 / EGD-e) protein is 2,3-bisphosphoglycerate-dependent phosphoglycerate mutase.